A 278-amino-acid polypeptide reads, in one-letter code: Protein mtd-1 (278 aa).

Positions 1-17 (MRSSLLLLVFFLSIGWA) are cleaved as a signal peptide. Residues 18–254 (RYCVHNEKSW…EMLEEIEARK (237 aa)) are Extracellular-facing. 4 N-linked (GlcNAc...) asparagine glycosylation sites follow: asparagine 40, asparagine 73, asparagine 163, and asparagine 190. A helical transmembrane segment spans residues 255–271 (VPVDSSAPVNIILSIAF). Residues 272–278 (SIFLIHF) are Cytoplasmic-facing.

The protein resides in the cell membrane. Functionally, plays a role in mechanosensory transduction (touch sensitivity). This is Protein mtd-1 from Caenorhabditis elegans.